A 254-amino-acid chain; its full sequence is N-acetylglucosaminyldiphosphoundecaprenol N-acetyl-beta-D-mannosaminyltransferase (254 aa).

Belongs to the glycosyltransferase 26 family. TagA/TarA subfamily.

The enzyme catalyses UDP-N-acetyl-alpha-D-mannosamine + N-acetyl-alpha-D-glucosaminyl-di-trans,octa-cis-undecaprenyl diphosphate = N-acetyl-beta-D-mannosaminyl-(1-&gt;4)-N-acetyl-alpha-D-glucosaminyl di-trans,octa-cis-undecaprenyl diphosphate + UDP + H(+). The protein operates within cell wall biogenesis; poly(ribitol phosphate) teichoic acid biosynthesis. In terms of biological role, catalyzes the conversion of GlcNAc-PP-undecaprenol into ManNAc-GlcNAc-PP-undecaprenol, the first committed lipid intermediate in the de novo synthesis of teichoic acid. The polypeptide is N-acetylglucosaminyldiphosphoundecaprenol N-acetyl-beta-D-mannosaminyltransferase (Staphylococcus aureus (strain NCTC 8325 / PS 47)).